The primary structure comprises 218 residues: Uracil-DNA glycosylase (218 aa).

The Proton acceptor role is filled by Asp-59.

It belongs to the uracil-DNA glycosylase (UDG) superfamily. UNG family.

The protein localises to the cytoplasm. The catalysed reaction is Hydrolyzes single-stranded DNA or mismatched double-stranded DNA and polynucleotides, releasing free uracil.. Its function is as follows. Excises uracil residues from the DNA which can arise as a result of misincorporation of dUMP residues by DNA polymerase or due to deamination of cytosine. This chain is Uracil-DNA glycosylase, found in Staphylococcus aureus (strain JH1).